Consider the following 146-residue polypeptide: Ribonuclease H (146 aa).

One can recognise an RNase H type-1 domain in the interval 1 to 143 (MQKKITIYTD…CDELARQAIQ (143 aa)). Residues Asp10, Glu48, Asp70, and Asp135 each coordinate Mg(2+).

Belongs to the RNase H family. As to quaternary structure, monomer. Mg(2+) serves as cofactor.

It localises to the cytoplasm. It catalyses the reaction Endonucleolytic cleavage to 5'-phosphomonoester.. In terms of biological role, endonuclease that specifically degrades the RNA of RNA-DNA hybrids. This is Ribonuclease H from Chlorobium luteolum (strain DSM 273 / BCRC 81028 / 2530) (Pelodictyon luteolum).